Reading from the N-terminus, the 261-residue chain is MAAVTPTVPEFVNVVVSDGSQDAGLAMLLLSRPPTNAMTRQVYREVVAAANELGRRDDVAAVILYGGHEIFSAGDDMPELRTLSAQEADTAARIRQQAVDAVAAIPKPTVAAITGYALGAGLTLALAADWRVSGDNVKFGATEILAGLIPSGDGMARLTRAAGPSRAKELVFSGRFFDAEEALALGLIDDMVAPDDVYDAAAAWARRFLDGPPHALAAAKAGISDVYELAPAERIAAERRRYVEVFAAGQGGGSKGDRGGR.

The protein belongs to the enoyl-CoA hydratase/isomerase family.

It catalyses the reaction a (3S)-3-hydroxyacyl-CoA = a (2E)-enoyl-CoA + H2O. The catalysed reaction is a 4-saturated-(3S)-3-hydroxyacyl-CoA = a (3E)-enoyl-CoA + H2O. Its function is as follows. Could possibly oxidize fatty acids using specific components. The sequence is that of Probable enoyl-CoA hydratase EchA17 (echA17) from Mycobacterium bovis (strain BCG / Pasteur 1173P2).